The sequence spans 550 residues: MDKLRLEVERWLNHPNVNWELKQQIKELNESEIQELFSLEKPLFGTAGVRNKMAPGYHGMNVFSYAYLTQGYVKYIESINEPKRQLRFLVARDTRKNGGLFLETVCDVITSMGHLAYVFDDNQPVSTPLVSHVIFKYGFSGGINITASHNPKDDNGFKVYDHTGAQLLDTQTNQLLSDLPCVTSMLDLELQPNPKFVHTLDNEKVYKNYFRELKKVLVINNNNFKDIKVVFSGLNGTSVCLMQRFLKYLGYSNIISVEEQNWFDENFENAPNLNPEYKDTWILAQKYAKKNNAKLIIMADPDADRFAIAELNNNQWHYFSGNETGAITAYYKLNHKVFKSPYIVSTFVSTYLVNKIAKRYGAFVHRTNVGFKYIGQAINELSQTNELVVGFEEAIGLITSDKLNREKDAYQAAALLLEIARHCKEQNITLLDFYKRILSEFGEYFNLTISHPFKATATDWKEEIKALFNQLINANLTEVAGFKVVKVHLDKQTNILEFGFENGWVKFRFSGTEPKLKFYFDLTNGTREALEKQAKKIYKFFVNLLKLNKA.

The active-site Phosphoserine intermediate is S148. The Mg(2+) site is built by S148, D300, D302, and D304.

The protein belongs to the phosphohexose mutase family. The cofactor is Mg(2+).

It catalyses the reaction alpha-D-mannose 1-phosphate = D-mannose 6-phosphate. The sequence is that of Phosphomannomutase (manB) from Mycoplasma genitalium (strain ATCC 33530 / DSM 19775 / NCTC 10195 / G37) (Mycoplasmoides genitalium).